A 638-amino-acid polypeptide reads, in one-letter code: Lactose permease (638 aa).

Residues 1–470 are permease; that stretch reads MHNHKVSGKQ…AQVIEELKSK (470 aa). The next 12 helical transmembrane spans lie at 27–47, 56–76, 94–114, 121–141, 166–186, 204–224, 261–281, 291–311, 320–340, 343–363, 395–415, and 429–449; these read FYGV…FSGL, IGLI…IDPI, WILI…TGIF, WILF…FYSL, LGAF…VPLV, WFAF…IVCF, LAYL…FYMY, FWVV…SFPV, WLFI…IFGH, VFLM…LVTV, FAGA…GMTG, and TFNM…IVVF. Residues 503-610 form the PTS EIIA type-1 domain; sequence SSVVDEDGKP…KDTIVIFYTQ (108 aa). A Phosphohistidine; by HPr modification is found at histidine 558.

It in the N-terminal section; belongs to the sodium:galactoside symporter (TC 2.A.2) family.

The protein resides in the cell membrane. Responsible for transport of beta-galactosides into the cell, with the concomitant uptake of protons (symport system), and also for transport of homologous and heterologous exchange of beta-galactosides. The protein is Lactose permease (lacS) of Lactobacillus helveticus (Lactobacillus suntoryeus).